A 293-amino-acid chain; its full sequence is Putative metal ABC transporter substrate-binding protein Hpf (293 aa).

The first 22 residues, 1 to 22, serve as a signal peptide directing secretion; it reads MRNSFKIMTALALGLFAMQANA. Residues 23–48 form an interaction with host components region; it reads KFKVVTTFTVIQDIAQNVAGNAATVE. Residues His-58, His-123, Glu-189, and Asp-264 each coordinate a divalent metal cation.

It belongs to the bacterial solute-binding protein 9 family. In terms of assembly, interacts with host laminin and vitronectin. Can interact with both immobilized and soluble vitronectin.

It is found in the cell outer membrane. The protein localises to the cell surface. It localises to the periplasm. Functionally, part of an ATP-binding cassette (ABC) transport system involved in metal import. Binds a metal with high affinity and specificity and delivers it to the membrane permease for translocation into the cytoplasm. Acts as an adhesin that promotes binding of H.influenzae to host laminin and vitronectin. In addition, interaction with serum vitronectin plays an important role in bacterial serum resistance. In Haemophilus influenzae (strain NTHi 3655), this protein is Putative metal ABC transporter substrate-binding protein Hpf (hpf).